Here is an 847-residue protein sequence, read N- to C-terminus: Glycogen phosphorylase, liver form (847 aa).

Position 2 is an N-acetylalanine (alanine 2). Serine 15 is modified (phosphoserine; by PHK; in form phosphorylase a). Residues 43 to 45 (DRN), tyrosine 76, and arginine 310 each bind AMP. Residue lysine 364 is modified to N6-succinyllysine. The residue at position 470 (lysine 470) is an N6-acetyllysine. 3 positions are modified to phosphoserine: serine 524, serine 561, and serine 639. The residue at position 681 (lysine 681) is an N6-(pyridoxal phosphate)lysine. Position 796 is an N6-acetyllysine (lysine 796).

Belongs to the glycogen phosphorylase family. Homodimer; enzymatically active. Interacts with PPP1R3B; recruits the phosphatase PP1 which dephosphorylates and inactivates PYGL/glycogen phosphorylase. Pyridoxal 5'-phosphate serves as cofactor. Acetylation, which is up-regulated by glucose and insulin and down-regulated by glucagon, inhibits the glycogen phosphorylase activity by promoting PPP1R3B-mediated recruitment of phosphatase PP1 and Ser-15 dephosphorylation. In terms of processing, phosphorylation at Ser-15 converts inactive phosphorylase b into active phosphorylase a. Dephosphorylation of Ser-15 by phosphatase PP1 inactivates the enzyme.

It localises to the cytoplasm. The protein resides in the cytosol. The enzyme catalyses [(1-&gt;4)-alpha-D-glucosyl](n) + phosphate = [(1-&gt;4)-alpha-D-glucosyl](n-1) + alpha-D-glucose 1-phosphate. With respect to regulation, allosterically regulated through the non-covalent binding of metabolites, being activated by AMP and inhibited by ATP, ADP, and glucose-6-phosphate. The activity is also controlled by post-translational modifications including phosphorylation and acetylation. In terms of biological role, allosteric enzyme that catalyzes the rate-limiting step in glycogen catabolism, the phosphorolytic cleavage of glycogen to produce glucose-1-phosphate, and plays a central role in maintaining cellular and organismal glucose homeostasis. The sequence is that of Glycogen phosphorylase, liver form from Homo sapiens (Human).